We begin with the raw amino-acid sequence, 298 residues long: ATP synthase gamma chain (298 aa).

This sequence belongs to the ATPase gamma chain family. In terms of assembly, F-type ATPases have 2 components, CF(1) - the catalytic core - and CF(0) - the membrane proton channel. CF(1) has five subunits: alpha(3), beta(3), gamma(1), delta(1), epsilon(1). CF(0) has three main subunits: a, b and c.

It localises to the cell membrane. In terms of biological role, produces ATP from ADP in the presence of a proton gradient across the membrane. The gamma chain is believed to be important in regulating ATPase activity and the flow of protons through the CF(0) complex. The sequence is that of ATP synthase gamma chain from Frankia casuarinae (strain DSM 45818 / CECT 9043 / HFP020203 / CcI3).